Consider the following 512-residue polypeptide: GMP synthase [glutamine-hydrolyzing] (512 aa).

One can recognise a Glutamine amidotransferase type-1 domain in the interval 7 to 197 (TILILDFGGQ…LFEVCDCSAD (191 aa)). Cys-84 (nucleophile) is an active-site residue. Active-site residues include His-171 and Glu-173. The region spanning 198–387 (WTMDSLIEQT…LGIPDEILYR (190 aa)) is the GMPS ATP-PPase domain. 225 to 231 (SGGVDSA) serves as a coordination point for ATP.

As to quaternary structure, homodimer.

It carries out the reaction XMP + L-glutamine + ATP + H2O = GMP + L-glutamate + AMP + diphosphate + 2 H(+). It participates in purine metabolism; GMP biosynthesis; GMP from XMP (L-Gln route): step 1/1. In terms of biological role, catalyzes the synthesis of GMP from XMP. This Caldanaerobacter subterraneus subsp. tengcongensis (strain DSM 15242 / JCM 11007 / NBRC 100824 / MB4) (Thermoanaerobacter tengcongensis) protein is GMP synthase [glutamine-hydrolyzing].